Reading from the N-terminus, the 518-residue chain is Cytochrome P450 82E3 (518 aa).

A helical membrane pass occupies residues 2 to 22 (VFPVEAIVGLVTFTFLFYFLW). Residue Lys-254 forms a Glycyl lysine isopeptide (Lys-Gly) (interchain with G-Cter in ubiquitin) linkage. Position 458 (Cys-458) interacts with heme.

It belongs to the cytochrome P450 family. CYP82E2 subfamily. It depends on heme as a cofactor. Expressed at low levels in green leaves.

It localises to the membrane. Its pathway is alkaloid biosynthesis; nicotine biosynthesis. Its function is as follows. No nicotine N-demethylase activity. This is Cytochrome P450 82E3 from Nicotiana tabacum (Common tobacco).